Consider the following 434-residue polypeptide: ATP-dependent RNA helicase uap56 (434 aa).

The interval 1 to 43 (MASAQEDLIDYEEEEELVQDQPAQEITPAADTAENGEKSDKKG) is disordered. Positions 7 to 18 (DLIDYEEEEELV) are enriched in acidic residues. The Q motif signature appears at 51 to 79 (TGFRDFLLKPELLRAITDSGFEHPSEVQQ). Residues 82–257 (IPQSILGTDV…KKFMQNPLEI (176 aa)) enclose the Helicase ATP-binding domain. 95 to 102 (AKSGMGKT) contributes to the ATP binding site. The DECD box motif lies at 204-207 (DECD). In terms of domain architecture, Helicase C-terminal spans 269 to 430 (GLQQHYVKLE…ELPDEIDVGS (162 aa)).

The protein belongs to the DEAD box helicase family. DECD subfamily. As to quaternary structure, interacts with mlo3 and rae1.

Its subcellular location is the nucleus. It catalyses the reaction ATP + H2O = ADP + phosphate + H(+). In terms of biological role, ATP-binding RNA helicase involved in transcription elongation and required for the export of mRNA out of the nucleus. SUB2 also plays a role in pre-mRNA splicing and spliceosome assembly. May be involved in rDNA and telomeric silencing, and maintenance of genome integrity. Links the mRNA adapter mlo3 to rae1 for targeting mRNA-protein complex to the proteins of the nucleoporin complex (NPC). This chain is ATP-dependent RNA helicase uap56 (uap56), found in Schizosaccharomyces pombe (strain 972 / ATCC 24843) (Fission yeast).